An 810-amino-acid polypeptide reads, in one-letter code: LPS-assembly protein LptD (810 aa).

2 disordered regions span residues Met1–Gly26 and Ser54–Ser79. The N-terminal stretch at Met1–Ala49 is a signal peptide.

This sequence belongs to the LptD family. As to quaternary structure, component of the lipopolysaccharide transport and assembly complex. Interacts with LptE and LptA.

Its subcellular location is the cell outer membrane. Functionally, together with LptE, is involved in the assembly of lipopolysaccharide (LPS) at the surface of the outer membrane. This chain is LPS-assembly protein LptD, found in Cupriavidus pinatubonensis (strain JMP 134 / LMG 1197) (Cupriavidus necator (strain JMP 134)).